We begin with the raw amino-acid sequence, 322 residues long: Phosphatidylserine decarboxylase proenzyme (322 aa).

Residues D90, H147, and S254 each act as charge relay system; for autoendoproteolytic cleavage activity in the active site. Residue S254 is the Schiff-base intermediate with substrate; via pyruvic acid; for decarboxylase activity of the active site. S254 bears the Pyruvic acid (Ser); by autocatalysis mark. Positions 296-322 are disordered; it reads EPAPLPAEEIKAEHDASPLVDNKKDDT. Positions 303–322 are enriched in basic and acidic residues; it reads EEIKAEHDASPLVDNKKDDT.

Belongs to the phosphatidylserine decarboxylase family. PSD-B subfamily. Prokaryotic type I sub-subfamily. As to quaternary structure, heterodimer of a large membrane-associated beta subunit and a small pyruvoyl-containing alpha subunit. Pyruvate is required as a cofactor. Post-translationally, is synthesized initially as an inactive proenzyme. Formation of the active enzyme involves a self-maturation process in which the active site pyruvoyl group is generated from an internal serine residue via an autocatalytic post-translational modification. Two non-identical subunits are generated from the proenzyme in this reaction, and the pyruvate is formed at the N-terminus of the alpha chain, which is derived from the carboxyl end of the proenzyme. The autoendoproteolytic cleavage occurs by a canonical serine protease mechanism, in which the side chain hydroxyl group of the serine supplies its oxygen atom to form the C-terminus of the beta chain, while the remainder of the serine residue undergoes an oxidative deamination to produce ammonia and the pyruvoyl prosthetic group on the alpha chain. During this reaction, the Ser that is part of the protease active site of the proenzyme becomes the pyruvoyl prosthetic group, which constitutes an essential element of the active site of the mature decarboxylase.

It is found in the cell membrane. It catalyses the reaction a 1,2-diacyl-sn-glycero-3-phospho-L-serine + H(+) = a 1,2-diacyl-sn-glycero-3-phosphoethanolamine + CO2. The protein operates within phospholipid metabolism; phosphatidylethanolamine biosynthesis; phosphatidylethanolamine from CDP-diacylglycerol: step 2/2. In terms of biological role, catalyzes the formation of phosphatidylethanolamine (PtdEtn) from phosphatidylserine (PtdSer). In Salmonella dublin (strain CT_02021853), this protein is Phosphatidylserine decarboxylase proenzyme.